A 134-amino-acid chain; its full sequence is ATP synthase epsilon chain, chloroplastic (134 aa).

It belongs to the ATPase epsilon chain family. As to quaternary structure, F-type ATPases have 2 components, CF(1) - the catalytic core - and CF(0) - the membrane proton channel. CF(1) has five subunits: alpha(3), beta(3), gamma(1), delta(1), epsilon(1). CF(0) has three main subunits: a, b and c.

It localises to the plastid. Its subcellular location is the chloroplast thylakoid membrane. Produces ATP from ADP in the presence of a proton gradient across the membrane. The sequence is that of ATP synthase epsilon chain, chloroplastic from Porphyra purpurea (Red seaweed).